The sequence spans 320 residues: Formimidoylglutamase (320 aa).

The Mn(2+) site is built by histidine 125, aspartate 153, histidine 155, aspartate 157, aspartate 244, and aspartate 246.

The protein belongs to the arginase family. Mn(2+) is required as a cofactor.

The catalysed reaction is N-formimidoyl-L-glutamate + H2O = formamide + L-glutamate. It participates in amino-acid degradation; L-histidine degradation into L-glutamate; L-glutamate from N-formimidoyl-L-glutamate (hydrolase route): step 1/1. Its function is as follows. Catalyzes the conversion of N-formimidoyl-L-glutamate to L-glutamate and formamide. The polypeptide is Formimidoylglutamase (Rhodococcus jostii (strain RHA1)).